We begin with the raw amino-acid sequence, 145 residues long: Trafficking protein particle complex subunit 1 (145 aa).

This sequence belongs to the TRAPP small subunits family. BET5 subfamily. In terms of assembly, part of the multisubunit transport protein particle (TRAPP) complex. The heterodimer TRAPPC6B-TRAPPC3 interacts with TRAPPC1 likely providing a core for TRAPP complex formation.

The protein resides in the golgi apparatus. The protein localises to the cis-Golgi network. Its subcellular location is the endoplasmic reticulum. May play a role in vesicular transport from endoplasmic reticulum to Golgi. This is Trafficking protein particle complex subunit 1 from Mus musculus (Mouse).